The following is a 186-amino-acid chain: Ran guanine nucleotide release factor (186 aa).

The interval 27–70 is interaction with RAN; it reads DLRPVPDHQEVFCHRVTDQSLIVELLELQAHVQGEEAARYHFED.

Belongs to the MOG1 family. As to quaternary structure, monomer. Interacts with RAN, both RAN-GTP and RAN-GDP. Competes with RCC1 for a common binding site on RAN and thereby inhibits RCC1-mediated nucleotide exchange. Forms a complex with RAN-GTP and RANBP1. Interacts with the cytoplasmic loop 2 of SCN5A.

It is found in the nucleus. The protein localises to the cytoplasm. Its subcellular location is the perinuclear region. The protein resides in the cell membrane. Functionally, may regulate the intracellular trafficking of RAN. Promotes guanine nucleotide release from RAN and inhibits binding of new GTP by preventing the binding of the RAN guanine nucleotide exchange factor RCC1. Regulates the levels of GTP-bound RAN in the nucleus, and thereby plays a role in the regulation of RAN-dependent mitotic spindle dynamics. Enhances the expression of SCN5A at the cell membrane in cardiomyocytes. The chain is Ran guanine nucleotide release factor (RANGRF) from Bos taurus (Bovine).